We begin with the raw amino-acid sequence, 257 residues long: DNA repair protein RecO (257 aa).

It belongs to the RecO family.

Its function is as follows. Involved in DNA repair and RecF pathway recombination. The chain is DNA repair protein RecO from Streptococcus thermophilus (strain ATCC BAA-491 / LMD-9).